The primary structure comprises 281 residues: Lipoyl synthase (281 aa).

Positions 37, 42, 48, 63, 67, 70, and 274 each coordinate [4Fe-4S] cluster. One can recognise a Radical SAM core domain in the interval 49-263 (WSRGTATFMI…RQQAVNKGFK (215 aa)).

Belongs to the radical SAM superfamily. Lipoyl synthase family. [4Fe-4S] cluster is required as a cofactor.

Its subcellular location is the cytoplasm. It catalyses the reaction [[Fe-S] cluster scaffold protein carrying a second [4Fe-4S](2+) cluster] + N(6)-octanoyl-L-lysyl-[protein] + 2 oxidized [2Fe-2S]-[ferredoxin] + 2 S-adenosyl-L-methionine + 4 H(+) = [[Fe-S] cluster scaffold protein] + N(6)-[(R)-dihydrolipoyl]-L-lysyl-[protein] + 4 Fe(3+) + 2 hydrogen sulfide + 2 5'-deoxyadenosine + 2 L-methionine + 2 reduced [2Fe-2S]-[ferredoxin]. Its pathway is protein modification; protein lipoylation via endogenous pathway; protein N(6)-(lipoyl)lysine from octanoyl-[acyl-carrier-protein]: step 2/2. Functionally, catalyzes the radical-mediated insertion of two sulfur atoms into the C-6 and C-8 positions of the octanoyl moiety bound to the lipoyl domains of lipoate-dependent enzymes, thereby converting the octanoylated domains into lipoylated derivatives. This Parabacteroides distasonis (strain ATCC 8503 / DSM 20701 / CIP 104284 / JCM 5825 / NCTC 11152) protein is Lipoyl synthase.